Here is a 514-residue protein sequence, read N- to C-terminus: Probable E3 ubiquitin-protein ligase ARI10 (514 aa).

Over residues 1 to 18 (MDYSDDDMIDNESGEENN) the composition is skewed to acidic residues. Residues 1 to 26 (MDYSDDDMIDNESGEENNSDGGGNES) form a disordered region. The interval 117 to 322 (VDIQCGICFE…SDHYACNNYV (206 aa)) is TRIAD supradomain. Zn(2+)-binding residues include Cys121, Cys124, Cys138, His140, Cys143, Cys146, Cys166, Cys171, Cys210, Cys215, Cys231, Cys233, Cys238, Cys241, His246, Cys251, Cys278, and Cys281. The segment at 121 to 171 (CGICFESYTRKEIASVSCGHPYCKTCWTGYITTKIEDGPGCLRVKCPEPSC) adopts an RING-type 1 zinc-finger fold. An IBR-type zinc finger spans residues 190–251 (DKYYRYFLRS…SEDAHSPVDC (62 aa)). The segment at 278–308 (CPKCKRPIEKSHGCNHMTCSASCGHRFCWIC) adopts an RING-type 2; atypical zinc-finger fold. Cys291 is a catalytic residue. Positions 296, 300, 305, 308, 315, and 318 each coordinate Zn(2+).

This sequence belongs to the RBR family. Ariadne subfamily. Zn(2+) serves as cofactor.

The enzyme catalyses [E2 ubiquitin-conjugating enzyme]-S-ubiquitinyl-L-cysteine + [acceptor protein]-L-lysine = [E2 ubiquitin-conjugating enzyme]-L-cysteine + [acceptor protein]-N(6)-ubiquitinyl-L-lysine.. Its pathway is protein modification; protein ubiquitination. Functionally, might act as an E3 ubiquitin-protein ligase, or as part of E3 complex, which accepts ubiquitin from specific E2 ubiquitin-conjugating enzymes and then transfers it to substrates. The sequence is that of Probable E3 ubiquitin-protein ligase ARI10 (ARI10) from Arabidopsis thaliana (Mouse-ear cress).